The primary structure comprises 153 residues: D-aminoacyl-tRNA deacylase (153 aa).

Positions 137 to 138 (GP) match the Gly-cisPro motif, important for rejection of L-amino acids motif.

It belongs to the DTD family. In terms of assembly, homodimer.

The protein localises to the cytoplasm. The enzyme catalyses glycyl-tRNA(Ala) + H2O = tRNA(Ala) + glycine + H(+). It carries out the reaction a D-aminoacyl-tRNA + H2O = a tRNA + a D-alpha-amino acid + H(+). Its function is as follows. An aminoacyl-tRNA editing enzyme that deacylates mischarged D-aminoacyl-tRNAs. Also deacylates mischarged glycyl-tRNA(Ala), protecting cells against glycine mischarging by AlaRS. Acts via tRNA-based rather than protein-based catalysis; rejects L-amino acids rather than detecting D-amino acids in the active site. By recycling D-aminoacyl-tRNA to D-amino acids and free tRNA molecules, this enzyme counteracts the toxicity associated with the formation of D-aminoacyl-tRNA entities in vivo and helps enforce protein L-homochirality. This is D-aminoacyl-tRNA deacylase from Dehalococcoides mccartyi (strain ATCC BAA-2266 / KCTC 15142 / 195) (Dehalococcoides ethenogenes (strain 195)).